Here is a 115-residue protein sequence, read N- to C-terminus: Cobalt-zinc-cadmium resistance protein CzcI (115 aa).

A signal peptide spans 1 to 20 (MRRFVLIFVLLILPFQFSWA). Polar residues predominate over residues 93-102 (QHSSEFSSLN). The tract at residues 93–115 (QHSSEFSSLNARAPDRPQWQRLA) is disordered.

Its subcellular location is the periplasm. Component of the czc cation-efflux system that confers resistance to cobalt, zinc and cadmium. May have a regulatory function. The chain is Cobalt-zinc-cadmium resistance protein CzcI (czcI) from Cupriavidus metallidurans (strain ATCC 43123 / DSM 2839 / NBRC 102507 / CH34) (Ralstonia metallidurans).